We begin with the raw amino-acid sequence, 349 residues long: uncharacterized protein (349 aa).

Positions 1-29 are cleaved as a signal peptide; the sequence is MKQKYENYFKKRLILNLLIFLLLACSSES.

This is an uncharacterized protein from Borreliella burgdorferi (strain ATCC 35210 / DSM 4680 / CIP 102532 / B31) (Borrelia burgdorferi).